Reading from the N-terminus, the 385-residue chain is GTP cyclohydrolase 1 type 2 homolog (385 aa).

H64, H65, D103, H333, and E337 together coordinate a divalent metal cation.

The protein belongs to the GTP cyclohydrolase I type 2/NIF3 family. In terms of assembly, homohexamer.

This is GTP cyclohydrolase 1 type 2 homolog from Mycobacterium leprae (strain TN).